The chain runs to 328 residues: MTERRIIHIDMDYFFAQVEMRDNPKLKGKPVIVGGKASSRGVVSTASYEARKYGVHSAMPMSQAHKLCPNGYFVTSNFGAYRETSAQIMSIFRSYTDKVEPMSLDEAYLDITELVRPDLPASKIAQYIRKDILENTHLTASAGVSYNKFLAKLASGMNKPYGMTVIDYQNVHDILMTLDIGDFPGVGKASKKVMHDNGIFNGRDLYEKTEFELIRLFGKRGRGLYNKARGIDHSEVKSSRVRKSVGTERTFATDVNDDEEILRKVWELSGKTAERLNKLQKSAKTVTVKIKTYQFETLSKQMSLRDSVSSEEDIYNIAYLLYNDLKDP.

Positions 6–187 (IIHIDMDYFF…LDIGDFPGVG (182 aa)) constitute a UmuC domain. Residues D10 and D105 each coordinate Mg(2+). E106 is a catalytic residue.

It belongs to the DNA polymerase type-Y family. Monomer. It depends on Mg(2+) as a cofactor.

The protein localises to the cytoplasm. The enzyme catalyses DNA(n) + a 2'-deoxyribonucleoside 5'-triphosphate = DNA(n+1) + diphosphate. Its function is as follows. Poorly processive, error-prone DNA polymerase involved in untargeted mutagenesis. Copies undamaged DNA at stalled replication forks, which arise in vivo from mismatched or misaligned primer ends. These misaligned primers can be extended by PolIV. Exhibits no 3'-5' exonuclease (proofreading) activity. May be involved in translesional synthesis, in conjunction with the beta clamp from PolIII. This chain is DNA polymerase IV, found in Staphylococcus aureus (strain bovine RF122 / ET3-1).